A 423-amino-acid chain; its full sequence is F-box/LRR-repeat protein 2 (423 aa).

The region spanning 9–55 is the F-box domain; the sequence is GLINKKLPKELLLRIFSFLDIVTLCRCAQISKAWNILALDGSNWQRI. LRR repeat units follow at residues 61-87, 88-113, 114-139, 140-165, 166-191, 192-217, 218-243, 244-269, 270-295, 296-321, 322-350, 351-375, and 376-401; these read QTDV…SLRG, CIGV…NLNG, CTKI…DLTS, CVSI…NLSW, CDQI…LLRG, CTQL…NLQS, CSRV…CLSG, CGSL…EAAR, CSHL…DLEE, CILI…SLSH, CELI…ELDN, CLLI…ELYD, and CQQV…AYFA. Residues 80-90 are interaction with Calmodulin; that stretch reads LRKLSLRGCIG. K201 is covalently cross-linked (Glycyl lysine isopeptide (Lys-Gly) (interchain with G-Cter in ubiquitin)). T404 is modified (phosphothreonine). The S-geranylgeranyl cysteine moiety is linked to residue C420. Positions 420-423 match the CAAX motif motif; the sequence is CVIL.

Part of the SCF (SKP1-CUL1-F-box) E3 ubiquitin-protein ligase complex SCF(FBXL2) composed of CUL1, SKP1, RBX1 and FBXL2. Interacts with calmodulin; may antagonize substrate ubiquitination by SCF(FBXL2). May interact with PIK3R1. Interacts with PTPN13. In terms of processing, phosphorylated by GSK-beta (GSK3B), promoting recognition by FBXO3, leading to its ubiquitination by the SCF(FBXO3) complex. Ubiquitinated at Lys-201 by the SCF(FBXO3) complex in response to lipopolysaccharide (LPS), leading to its degradation by the proteasome.

It is found in the membrane. It functions in the pathway protein modification; protein ubiquitination. Calcium-activated substrate recognition component of the SCF (SKP1-cullin-F-box protein) E3 ubiquitin-protein ligase complex, SCF(FBXL2), which mediates the ubiquitination and subsequent proteasomal degradation of target proteins. Unlike many F-box proteins, FBXL2 does not seem to target phosphodegron within its substrates but rather calmodulin-binding motifs and is thereby antagonized by calmodulin. This is the case for the cyclins CCND2 and CCND3 which polyubiquitination and subsequent degradation are inhibited by calmodulin. Through CCND2 and CCND3 degradation induces cell-cycle arrest in G(0). SCF(FBXL2) also mediates PIK3R2 ubiquitination and proteasomal degradation thereby regulating phosphatidylinositol 3-kinase signaling and autophagy. PCYT1A monoubiquitination by SCF(FBXL2) and subsequent degradation regulates synthesis of phosphatidylcholine, which is utilized for formation of membranes and of pulmonary surfactant. The SCF(FBXL2) complex acts as a regulator of inflammation by mediating ubiquitination and degradation of TRAF proteins (TRAF1, TRAF2, TRAF3, TRAF4, TRAF5 and TRAF6). The SCF(FBXL2) complex acts as a negative regulator of the NLRP3 inflammasome by mediating ubiquitination and degradation of NLRP3. The chain is F-box/LRR-repeat protein 2 from Bos taurus (Bovine).